We begin with the raw amino-acid sequence, 608 residues long: MATGQLFSRTTQALFYNYKQLPVQRMLDFDFLCGRETPSVAGIINPGSEGFQKLFFGQEEIAIPVHAAIEAACAAHPTADVFINFASFRSAAASSMAALKQPTIKVVAIIAEGVPESDTKQLIAYARANNKVVIGPATVGGIQAGAFKIGDTAGTIDNIIQCKLYRPGSVGFVSKSGGMSNEMYNTVARVTDGIYEGIAIGGDVFPGSTLSDHILRFNNIPQIKMMVVLGELGGRDEYSLVEALKEGKVNKPVVAWVSGTCARLFKSEVQFGHAGAKSGGEMESAQAKNQALIDAGAIVPTSFEALESAIKETFEKLVEEGKVSPIKEVIPPQIPEDLNSAIKSGKVRAPTHIISTISDDRGEEPCYAGVPMSSIIEQGYGVGDVISLLWFKRSLPRYCTKFIEICIMLCADHGPCVSGAHNTIVTARAGKDLVSSLVSGLLTIGPRFGGAIDDAARYFKDACDRNLTPYEFVEGMKKKGIRVPGIGHRIKSRDNRDKRVELLQKFARSNFPSVKYMEYAVTVETYTLSKANNLVLNVDGAIGSLFLDLLAGSGMFTKQEIDEIVQIGYLNGLFVLARSIGLIGHTFDQKRLKQPLYRHPWEDVLYTK.

ATP is bound by residues 214–234 (ILRF…ELGG) and 265–291 (FKSE…KNQA). Glu-231 is a Mg(2+) binding site. His-273 serves as the catalytic Tele-phosphohistidine intermediate. 292-302 (LIDAGAIVPTS) serves as a coordination point for CoA.

It belongs to the succinate/malate CoA ligase alpha subunit family. Heterooctamer of 4 alpha and 4 beta chains. In terms of tissue distribution, expressed in trichomes, epidermal leaf cells, anther tapetal cells, stigma and in young vascular bundles of expanding leaves, cotyledons, roots, pedicel of flowers and siliques.

The protein resides in the cytoplasm. It localises to the cytosol. It carries out the reaction oxaloacetate + acetyl-CoA + ADP + phosphate = citrate + ATP + CoA. Its function is as follows. ATP citrate-lyase is the primary enzyme responsible for the synthesis of cytosolic acetyl-CoA, used for the elongation of fatty acids and biosynthesis of isoprenoids, flavonoids and malonated derivatives. May supply substrate to the cytosolic acetyl-CoA carboxylase, which generates the malonyl-CoA used for the synthesis of a multitude of compounds, including very long chain fatty acids and flavonoids. Required for normal growth and development and elongation of C18 fatty acids to C20 to C24 fatty acids in seeds. n contrast to all known animal ACL enzymes having a homomeric structure, plant ACLs are composed of alpha and beta chains. In Arabidopsis thaliana (Mouse-ear cress), this protein is ATP-citrate synthase beta chain protein 2.